Here is a 167-residue protein sequence, read N- to C-terminus: Cytochrome b6-f complex subunit 4 (167 aa).

3 consecutive transmembrane segments (helical) span residues 36–56 (LLYI…GLAV), 95–115 (LLGV…PFLE), and 131–151 (TVFL…TLPI).

This sequence belongs to the cytochrome b family. PetD subfamily. In terms of assembly, the 4 large subunits of the cytochrome b6-f complex are cytochrome b6, subunit IV (17 kDa polypeptide, petD), cytochrome f and the Rieske protein, while the 4 small subunits are petG, petL, petM and petN. The complex functions as a dimer.

It is found in the plastid. The protein resides in the chloroplast thylakoid membrane. In terms of biological role, component of the cytochrome b6-f complex, which mediates electron transfer between photosystem II (PSII) and photosystem I (PSI), cyclic electron flow around PSI, and state transitions. This is Cytochrome b6-f complex subunit 4 from Calycanthus floridus var. glaucus (Eastern sweetshrub).